We begin with the raw amino-acid sequence, 1297 residues long: Cingulin-like protein 1 (1297 aa).

The tract at residues 1 to 550 (MELYFGEYQH…ELTQQTNEET (550 aa)) is head. The ZIM signature appears at 37–51 (AGSYGVSIRVQGIDG). Residues S113, S203, and S257 each carry the phosphoserine modification. Disordered stretches follow at residues 161–208 (NEVN…TSED), 245–306 (GVGE…TPTS), 364–396 (KPGLQRRGRSGKRNRINPDDRKRSRSVDSAFPF), and 428–467 (QRSVAQEHRGKHSPSSPPAKLQGAQGAHPKPPLQNKDGKV). Positions 197-206 (YGSQPNSPTS) are enriched in polar residues. A compositionally biased stretch (basic and acidic residues) spans 268-283 (ETKKNRPDVLPFRRQD). Phosphoserine is present on residues S284, S298, and S299. Low complexity predominate over residues 297-306 (SSSSSTTPTS). Residues 367-378 (LQRRGRSGKRNR) are compositionally biased toward basic residues. Over residues 379–389 (INPDDRKRSRS) the composition is skewed to basic and acidic residues. Residues S389 and S392 each carry the phosphoserine modification. A Phosphoserine modification is found at S482. The disordered stretch occupies residues 586–608 (SRAAGSAQGSNQAPNSPSEGNSL). Polar residues predominate over residues 592 to 608 (AQGSNQAPNSPSEGNSL). Residues 604–1251 (EGNSLLDQKN…LQGQLNSLKK (648 aa)) are a coiled coil. Residues S678 and S704 each carry the phosphoserine modification. Residues 1259-1297 (SSKVLDDSDDDDLSSDAGSLYEAPLSYAFPKDSTIASQI) form a tail region.

This sequence belongs to the cingulin family. In terms of assembly, homodimer or oligomer. Interacts with CD2AP and SH3BP1; probably part of a complex at cell junctions. Widely expressed. Highly expressed in the kidney and lung.

Its subcellular location is the cell junction. The protein localises to the tight junction. May be involved in anchoring the apical junctional complex, especially tight junctions, to actin-based cytoskeletons. This is Cingulin-like protein 1 from Mus musculus (Mouse).